Consider the following 794-residue polypeptide: 6-hydroxypseudooxynicotine dehydrogenase complex subunit gamma (794 aa).

As to quaternary structure, heterohexamer of 2 alpha (kdhA), 2 beta (kdhB) and 2 gamma (kdhC) subunit. Dimer of heterotrimers. Requires Mo-molybdopterin cytosine dinucleotide as cofactor.

The enzyme catalyses 6-hydroxypseudooxynicotine + A + H2O = 2,6-dihydroxypseudooxynicotine + AH2. Its pathway is alkaloid degradation; nicotine degradation. In terms of biological role, molybdo-flavoprotein enzyme complex involved in nicotine degradation. The subunit gamma (large subunit) contains the substrate-binding sites, the subunit alpha (medium subunit) binds FAD and the subunit beta (small subunit) has a 2Fe-2S ferredoxin-type domain which binds 2 2Fe-2S clusters. The polypeptide is 6-hydroxypseudooxynicotine dehydrogenase complex subunit gamma (kdhC) (Paenarthrobacter nicotinovorans (Arthrobacter nicotinovorans)).